The chain runs to 874 residues: Alanine--tRNA ligase (874 aa).

The Zn(2+) site is built by His-564, His-568, Cys-665, and His-669.

It belongs to the class-II aminoacyl-tRNA synthetase family. The cofactor is Zn(2+).

The protein localises to the cytoplasm. It carries out the reaction tRNA(Ala) + L-alanine + ATP = L-alanyl-tRNA(Ala) + AMP + diphosphate. Catalyzes the attachment of alanine to tRNA(Ala) in a two-step reaction: alanine is first activated by ATP to form Ala-AMP and then transferred to the acceptor end of tRNA(Ala). Also edits incorrectly charged Ser-tRNA(Ala) and Gly-tRNA(Ala) via its editing domain. The protein is Alanine--tRNA ligase of Polaromonas naphthalenivorans (strain CJ2).